Here is a 481-residue protein sequence, read N- to C-terminus: MSPQTETKASVGFKAGVKEYKLTYYTPEYETKDTDILAAFRVTPQPGVPPEEAGAAVAAESSTGTWTAVWTDGLTSLDRYKGRCYHIEPVPGEENQYIAYVAYPLDLFEEGSVTNMFTSIVGNVFGFKALRALRLEDLRVPPAYIKTFQGPPHGIQVERDKLNKYGRPLLGCTIKPKLGLSAKNYGRAVYECLRGGLDFTKDDENVNSQPFMRWRDRFCFCAEALFKAQAETGEIKGHYLNATAGTCEEMIKRAVFARELGVPIVMHDYLTGGFTANTSLAHYCRDNGLLLHIHRAMHAVIDRQKNHGMHFRVLAKGLRMSGGDHIHAGTVVGKLEGERDITLGFVDLLRDDFIEKDRSRGIYFTQDWVSLPGVIPVASGGIHVWHMPALTEIFGDDSVLQFGGGTLGHPWGNAPGAVANRVALEACVKARNEGRDLAAEGNEIIREASKWSPELAAACEVWKEIRFNFEAMDKLDKEKDL.

Residues 1–2 (MS) constitute a propeptide that is removed on maturation. Position 3 is an N-acetylproline (P3). Residue K14 is modified to N6,N6,N6-trimethyllysine. N123 and T173 together coordinate substrate. The Proton acceptor role is filled by K175. Substrate is bound at residue K177. Mg(2+)-binding residues include K201, D203, and E204. At K201 the chain carries N6-carboxylysine. H294 functions as the Proton acceptor in the catalytic mechanism. Substrate-binding residues include R295, H327, and S379.

It belongs to the RuBisCO large chain family. Type I subfamily. As to quaternary structure, heterohexadecamer of 8 large chains and 8 small chains; disulfide-linked. The disulfide link is formed within the large subunit homodimers. Mg(2+) serves as cofactor. The disulfide bond which can form in the large chain dimeric partners within the hexadecamer appears to be associated with oxidative stress and protein turnover.

Its subcellular location is the plastid. The protein resides in the chloroplast. The catalysed reaction is 2 (2R)-3-phosphoglycerate + 2 H(+) = D-ribulose 1,5-bisphosphate + CO2 + H2O. It carries out the reaction D-ribulose 1,5-bisphosphate + O2 = 2-phosphoglycolate + (2R)-3-phosphoglycerate + 2 H(+). Its function is as follows. RuBisCO catalyzes two reactions: the carboxylation of D-ribulose 1,5-bisphosphate, the primary event in carbon dioxide fixation, as well as the oxidative fragmentation of the pentose substrate in the photorespiration process. Both reactions occur simultaneously and in competition at the same active site. The sequence is that of Ribulose bisphosphate carboxylase large chain from Coffea arabica (Arabian coffee).